The sequence spans 508 residues: Zinc finger CCCH-type with G patch domain-containing protein (508 aa).

Residues 67–86 (QQESSHHDSGTPETDTKTSV) form a disordered region. Basic and acidic residues predominate over residues 69 to 86 (ESSHHDSGTPETDTKTSV). The segment at 161–188 (RSMVPCPYFLEGKCKFAGAECRFSHGYL) adopts a C3H1-type zinc-finger fold. A disordered region spans residues 253 to 282 (IYPLGPEEVESDSESDSQSDTGDSSSSKAA). Residues 259–269 (EEVESDSESDS) are compositionally biased toward acidic residues. A compositionally biased stretch (low complexity) spans 270–279 (QSDTGDSSSS). Positions 310-356 (TKGIGSKLMAKMGYIFGKGLGKDGEGRVEPIEVVVLPQGKSLDKCAE) constitute a G-patch domain. The interval 404–426 (SLHDLRVSHPGAKPDIRKTRKSA) is disordered.

It localises to the nucleus. Transcription repressor. The polypeptide is Zinc finger CCCH-type with G patch domain-containing protein (Nematostella vectensis (Starlet sea anemone)).